The sequence spans 372 residues: Cytochrome b (372 aa).

The next 4 membrane-spanning stretches (helical) occupy residues 25–45 (FGSM…FLAL), 69–90 (WIMQ…YIHI), 105–125 (WLSG…GYVL), and 170–190 (FFAL…IHII). Heme b-binding residues include H75 and H89. Residues H174 and H188 each coordinate heme b. An a ubiquinone-binding site is contributed by H193. 4 consecutive transmembrane segments (helical) span residues 218 to 238 (YKDM…LSFA), 280 to 300 (LGGT…PFTH), 312 to 332 (LSQI…WTAS), and 339 to 358 (FITI…ITTP).

It belongs to the cytochrome b family. As to quaternary structure, the cytochrome bc1 complex contains 3 respiratory subunits (MT-CYB, CYC1 and UQCRFS1), 2 core proteins (UQCRC1 and UQCRC2) and probably 6 low-molecular weight proteins. Heme b serves as cofactor.

Its subcellular location is the mitochondrion inner membrane. Functionally, component of the ubiquinol-cytochrome c reductase complex (complex III or cytochrome b-c1 complex) that is part of the mitochondrial respiratory chain. The b-c1 complex mediates electron transfer from ubiquinol to cytochrome c. Contributes to the generation of a proton gradient across the mitochondrial membrane that is then used for ATP synthesis. The polypeptide is Cytochrome b (MT-CYB) (Naja nivea (Cape cobra)).